A 333-amino-acid chain; its full sequence is Cell division protein FtsQ (333 aa).

The disordered stretch occupies residues 1–99; sequence MTGTGPHGDP…ARREAKRRAV (99 aa). Residues 1 to 118 lie on the Cytoplasmic side of the membrane; that stretch reads MTGTGPHGDP…VPRNTIRGLK (118 aa). Residues 11 to 22 show a composition bias toward acidic residues; that stretch reads AEDPAGPDDTAA. A compositionally biased stretch (low complexity) spans 44 to 57; that stretch reads TTETTAQTGTTAEA. The span at 73–92 shows a compositional bias: basic and acidic residues; sequence ERAERRAARDRAMAIEQARR. The helical transmembrane segment at 119 to 139 threads the bilayer; it reads VLMWAALVSVLAVALGLLLYF. At 140–333 the chain is on the extracellular side; that stretch reads TPIMSARNVE…VSSPDLPTVK (194 aa). The region spanning 143–211 is the POTRA domain; the sequence is MSARNVEVSG…STLKISIVER (69 aa).

It belongs to the FtsQ/DivIB family. FtsQ subfamily.

It is found in the cell membrane. Essential cell division protein. This Mycolicibacterium smegmatis (strain ATCC 700084 / mc(2)155) (Mycobacterium smegmatis) protein is Cell division protein FtsQ.